The primary structure comprises 419 residues: Methionine aminopeptidase 2 (419 aa).

The disordered stretch occupies residues 1-69 (MSTNSSNPNE…KITAIDNSYP (69 aa)). Residues 11–29 (VMEKVQDLKIDDSKPKVDS) show a composition bias toward basic and acidic residues. A compositionally biased stretch (acidic residues) spans 30–41 (EEQPEAESDGES). The span at 48 to 61 (KKKKKKKSKKKKKI) shows a compositional bias: basic residues. His-172 is a substrate binding site. Asp-192, Asp-203, and His-272 together coordinate a divalent metal cation. Residue His-280 participates in substrate binding. A divalent metal cation is bound by residues Glu-305 and Glu-400.

The protein belongs to the peptidase M24A family. Methionine aminopeptidase eukaryotic type 2 subfamily. The cofactor is Co(2+). Zn(2+) is required as a cofactor. Mn(2+) serves as cofactor. It depends on Fe(2+) as a cofactor.

The protein resides in the cytoplasm. It catalyses the reaction Release of N-terminal amino acids, preferentially methionine, from peptides and arylamides.. In terms of biological role, cotranslationally removes the N-terminal methionine from nascent proteins. The N-terminal methionine is often cleaved when the second residue in the primary sequence is small and uncharged (Met-Ala-, Cys, Gly, Pro, Ser, Thr, or Val). The sequence is that of Methionine aminopeptidase 2 from Debaryomyces hansenii (strain ATCC 36239 / CBS 767 / BCRC 21394 / JCM 1990 / NBRC 0083 / IGC 2968) (Yeast).